The primary structure comprises 1065 residues: MKILILGIFLFLCSTPAWAKEKHYYIGIIETTWDYASDHGEKKLISVDTEHSNIYLQNGPDRIGRLYKKALYLQYTDETFRTTIEKPVWLGFLGPIIKAETGDKVYVHLKNLASRPYTFHSHGITYYKEHEGAIYPDNTTDFQRADDKVYPGEQYTYMLLATEEQSPGEGDGNCVTRIYHSHIDAPKDIASGLIGPLIICKKDSLDKEKEKHIDREFVVMFSVVDENFSWYLEDNIKTYCSEPEKVDKDNEDFQESNRMYSVNGYTFGSLPGLSMCAEDRVKWYLFGMGNEVDVHAAFFHGQALTNKNYRIDTINLFPATLFDAYMVAQNPGEWMLSCQNLNHLKAGLQAFFQVQECNKSSSKDNIRGKHVRHYYIAAEEIIWNYAPSGIDIFTKENLTAPGSDSAVFFEQGTTRIGGSYKKLVYREYTDASFTNRKERGPEEEHLGILGPVIWAEVGDTIRVTFHNKGAYPLSIEPIGVRFNKNNEGTYYSPNYNPQSRSVPPSASHVAPTETFTYEWTVPKEVGPTNADPVCLAKMYYSAVEPTKDIFTGLIGPMKICKKGSLHANGRQKDVDKEFYLFPTVFDENESLLLEDNIRMFTTAPDQVDKEDEDFQESNKMHSMNGFMYGNQPGLTMCKGDSVVWYLFSAGNEADVHGIYFSGNTYLWRGERRDTANLFPQTSLTLHMWPDTEGTFNVECLTTDHYTGGMKQKYTVNQCRRQSEDSTFYLGERTYYIAAVEVEWDYSPQREWEKELHHLQEQNVSNAFLDKGEFYIGSKYKKVVYRQYTDSTFRVPVERKAEEEHLGILGPQLHADVGDKVKIIFKNMATRPYSIHAHGVQTESSTVTPTLPGETLTYVWKIPERSGAGTEDSACIPWAYYSTVDQVKDLYSGLIGPLIVCRRPYLKVFNPRRKLEFALLFLVFDENESWYLDDNIKTYSDHPEKVNKDDEEFIESNKMHAINGRMFGNLQGLTMHVGDEVNWYLMGMGNEIDLHTVHFHGHSFQYKHRGVYSSDVFDIFPGTYQTLEMFPRTPGIWLLHCHVTDHIHAGMETTYTVLQNEDTKSG.

An N-terminal signal peptide occupies residues 1–19 (MKILILGIFLFLCSTPAWA). Plastocyanin-like domains follow at residues 20–200 (KEKH…LIIC) and 209–357 (KEKH…VQEC). The Na(+) site is built by Y55, G64, and Y67. Positions 120 and 122 each coordinate Cu(2+). Residue H120 coordinates O2. K128 is a binding site for Ca(2+). A glycan (N-linked (GlcNAc...) (complex) asparagine) is linked at N138. Residues Q143, D146, and D147 each coordinate Ca(2+). C174 and C200 are joined by a disulfide. Cu(2+) contacts are provided by H180 and H182. O2 is bound at residue H180. S256 contacts Na(+). C276 and C357 form a disulfide bridge. Cu(2+) contacts are provided by H295, C338, and H343. N358 and N397 each carry an N-linked (GlcNAc...) (complex) asparagine glycan. 2 Plastocyanin-like domains span residues 370 to 560 (HVRH…MKIC) and 570 to 718 (RQKD…VNQC). Positions 408, 417, and 420 each coordinate Na(+). An intrachain disulfide couples C534 to C560. N588 carries N-linked (GlcNAc...) asparagine glycosylation. Residue S617 coordinates Na(+). A disulfide bond links C637 and C718. Cu(2+) contacts are provided by H656, C699, H704, and M709. C699 functions as the Nucleophile; for glutathione peroxidase activity in the catalytic mechanism. S722 is modified (phosphoserine; by FAM20C). 2 Plastocyanin-like domains span residues 730 to 900 (GERT…LIVC) and 908 to 1061 (FNPR…QNED). N-linked (GlcNAc...) (complex) asparagine glycosylation occurs at N762. F767, G776, and Y779 together coordinate Na(+). Cysteines 874 and 900 form a disulfide. N926 carries an N-linked (GlcNAc...) asparagine glycan. S955 is a binding site for Na(+). H994, H997, H999, H1039, C1040, H1041, H1045, and M1050 together coordinate Cu(2+). Residues H997 and H999 each coordinate O2. An O2-binding site is contributed by H1041.

This sequence belongs to the multicopper oxidase family. As to quaternary structure, found in a complex with MPO and LTF; interacts directly with MPO and LTF, which allows Fe(3+) incorporation into LTF, activation of CP ferroxidase activity and protection of CP antioxidant properties by MPO. Cu(2+) is required as a cofactor. Expressed by the liver and secreted in plasma.

It is found in the secreted. The catalysed reaction is 4 Fe(2+) + O2 + 4 H(+) = 4 Fe(3+) + 2 H2O. The enzyme catalyses 4 Cu(+) + O2 + 4 H(+) = 4 Cu(2+) + 2 H2O. It carries out the reaction a hydroperoxide + 2 glutathione = an alcohol + glutathione disulfide + H2O. It catalyses the reaction 4 nitric oxide + O2 + 2 H2O = 4 nitrite + 4 H(+). The catalysed reaction is 2 glutathione + H2O2 = glutathione disulfide + 2 H2O. Functionally, multifunctional blue, copper-binding (6-7 atoms per molecule) glycoprotein. It has ferroxidase activity oxidizing Fe(2+) to Fe(3+) without releasing radical oxygen species. It is involved in iron transport across the cell membrane. Copper ions provide a large number of enzymatic activites. Oxidizes highly toxic ferrous ions to the ferric state for further incorporation onto apo-transferrins, catalyzes Cu(+) oxidation and promotes the oxidation of biogenic amines such as norepinephrin and serotonin. Provides Cu(2+) ions for the ascorbate-mediated deaminase degradation of the heparan sulfate chains of GPC1. Has glutathione peroxidase-like activity, can remove both hydrogen peroxide and lipid hydroperoxide in the presence of thiols. Also shows NO-oxidase and NO2 synthase activities that determine endocrine NO homeostasis. The sequence is that of Ceruloplasmin from Homo sapiens (Human).